We begin with the raw amino-acid sequence, 236 residues long: Small ribosomal subunit protein uS3 (236 aa).

The region spanning 39 to 107 is the KH type-2 domain; that stretch reads IREFLTEELK…DTSLNIVEVR (69 aa). A disordered region spans residues 214–236; it reads ASERRAVEGDNQGSSSNRRRENA.

Belongs to the universal ribosomal protein uS3 family. As to quaternary structure, part of the 30S ribosomal subunit. Forms a tight complex with proteins S10 and S14.

In terms of biological role, binds the lower part of the 30S subunit head. Binds mRNA in the 70S ribosome, positioning it for translation. This chain is Small ribosomal subunit protein uS3, found in Brucella melitensis biotype 1 (strain ATCC 23456 / CCUG 17765 / NCTC 10094 / 16M).